The chain runs to 370 residues: Phosphate acyltransferase (370 aa).

This sequence belongs to the PlsX family. As to quaternary structure, homodimer. Probably interacts with PlsY.

The protein resides in the cytoplasm. The enzyme catalyses a fatty acyl-[ACP] + phosphate = an acyl phosphate + holo-[ACP]. It functions in the pathway lipid metabolism; phospholipid metabolism. In terms of biological role, catalyzes the reversible formation of acyl-phosphate (acyl-PO(4)) from acyl-[acyl-carrier-protein] (acyl-ACP). This enzyme utilizes acyl-ACP as fatty acyl donor, but not acyl-CoA. The chain is Phosphate acyltransferase from Paracoccus denitrificans (strain Pd 1222).